A 196-amino-acid polypeptide reads, in one-letter code: MSAANMPTTTGAQGSGNQVPTTSTTIVNHFRELIKEPKNLDEAANYLFQTLLDDAVVGIFNETHHLRKSGNLAALDGVPEDSTYRMCEMPNLDIFGISTAKKPMDCTCPNCDRLVAAARFAPHLEKCMGMGRISSRIASRRLATKEGATSAHLHSSGNTGGTDDEDDVDWSSDKRRKKSNQNSRNNGSKKNNGKTF.

Positions 1 to 22 are disordered; it reads MSAANMPTTTGAQGSGNQVPTT. The segment at 106 to 127 adopts an SGF11-type zinc-finger fold; the sequence is CTCPNCDRLVAAARFAPHLEKC. A disordered region spans residues 141–196; it reads RLATKEGATSAHLHSSGNTGGTDDEDDVDWSSDKRRKKSNQNSRNNGSKKNNGKTF. Serine 172 carries the post-translational modification Phosphoserine. Low complexity predominate over residues 180–196; it reads NQNSRNNGSKKNNGKTF.

It belongs to the SGF11 family. In terms of assembly, component of some SAGA transcription coactivator-HAT complexes, at least composed of Ada2b, not/nonstop, Pcaf/Gcn5, Sgf11 and Spt3. Within the SAGA complex, Sgf11, e(y)2, and not/nonstop form an additional subcomplex of SAGA called the DUB module (deubiquitination module). Interacts directly with not/nonstop. Interacts with the AMEX complex component xmas-2. Interacts with Cbp80; important for promoter recruitment of Sgf11 that is not associated with the DUB module.

Its subcellular location is the nucleus. It is found in the nucleoplasm. The protein localises to the cytoplasm. Component of the transcription regulatory histone acetylation (HAT) complex SAGA, a multiprotein complex that activates transcription by remodeling chromatin and mediating histone acetylation and deubiquitination. Within the SAGA complex, participates in a subcomplex that specifically deubiquitinates histone H2B. The SAGA complex is recruited to specific gene promoters by activators, where it is required for transcription. Required for nuclear receptor-mediated transactivation. Binds independently on SAGA to promoters in an RNA-dependent manner. Binds to mRNA and is essential for total mRNA export from the nucleus. Required to counteract heterochromatin silencing. Controls the development of neuronal connectivity in visual system by being required for accurate axon targeting in the optic lobe. Required for expression of ecdysone-induced genes such as br/broad. In Drosophila simulans (Fruit fly), this protein is SAGA-associated factor 11 homolog.